Here is a 142-residue protein sequence, read N- to C-terminus: Lipoprotein MlpI (142 aa).

An N-terminal signal peptide occupies residues 1 to 17 (MKIINILFCLFLLMLNS). Cysteine 18 carries N-palmitoyl cysteine lipidation. A lipid anchor (S-diacylglycerol cysteine) is attached at cysteine 18. Residues 22–54 (DTNTSQTKSRQKRDLTQKEATQEKPKSKEDLLR) form a disordered region. Residues 33 to 54 (KRDLTQKEATQEKPKSKEDLLR) show a composition bias toward basic and acidic residues.

Belongs to the Multicopy lipoprotein (Mlp) family.

It localises to the cell outer membrane. Its function is as follows. An outer membrane protein that may participate in pathogenesis. Some human Lyme disease patients have antibodies against this protein. The Mlp proteins probably undergo intragenic recombination, generating new alleles. The sequence is that of Lipoprotein MlpI from Borreliella burgdorferi (strain ATCC 35210 / DSM 4680 / CIP 102532 / B31) (Borrelia burgdorferi).